Here is a 254-residue protein sequence, read N- to C-terminus: Galactitol 2-dehydrogenase (L-tagatose-forming) (254 aa).

NAD(+) is bound by residues serine 21–isoleucine 23, aspartate 42, aspartate 66–valine 67, tyrosine 159, lysine 163, and valine 192–threonine 194. Tyrosine 159 acts as the Proton acceptor in catalysis. Residue tryptophan 254 coordinates Mg(2+).

It belongs to the short-chain dehydrogenases/reductases (SDR) family. In terms of assembly, homotetramer. The cofactor is a divalent metal cation.

The enzyme catalyses galactitol + NAD(+) = keto-L-tagatose + NADH + H(+). Inhibited by the chelating agents EDTA and alpha,alpha'-dipyridyl. Inhibited by Zn(2+) and Fe(2+). Functionally, catalyzes the interconversion of galactitol to the rare sugar L-tagatose. Shows activity with a wide range of substrates, and catalyzes the oxidation of a variety of polyvalent aliphatic alcohols and polyols to the corresponding ketones and ketoses, respectively, and in the reverse reaction, it reduces ketones with high stereoselectivity yielding the corresponding S-configurated alcohols. Shows high activity with D-threitol, xylitol, 1,2-hexanediol, 1,2-pentanediol, 2-hexanol, L-erythrulose, D-ribulose and acetoin. Specific for NAD(+). The protein is Galactitol 2-dehydrogenase (L-tagatose-forming) of Cereibacter sphaeroides (Rhodobacter sphaeroides).